Reading from the N-terminus, the 817-residue chain is Verprolin (817 aa).

Residues 1–15 (MAGAPAPPPPPPPPA) are compositionally biased toward pro residues. The disordered stretch occupies residues 1–752 (MAGAPAPPPP…THTNQPDVDV (752 aa)). The WH2 1 domain maps to 30–47 (GRDALLGDIRKGMKLKKA). Residues 37–51 (DIRKGMKLKKAETND) show a composition bias toward basic and acidic residues. Low complexity predominate over residues 62–79 (VSSASGSSGTVSSKGPSM). The WH2 2 domain maps to 87 to 106 (MGAPQLGDILAGGIPKLKHI). The N-linked (GlcNAc...) asparagine glycan is linked to Asn-109. Over residues 119 to 180 (SAPPIPGAVP…VPSSPAPPLP (62 aa)) the composition is skewed to pro residues. The N-linked (GlcNAc...) asparagine glycan is linked to Asn-212. A compositionally biased stretch (pro residues) spans 236 to 245 (PQAPPPPPTP). Positions 254–265 (IKPTDNAVSPPS) are enriched in polar residues. Over residues 306–335 (SQPPLPSSAPPIPTSHAPPLPPTAPPPPSL) the composition is skewed to pro residues. Residues 336–348 (PNVTSAPKKATSA) are compositionally biased toward low complexity. Asn-337 carries N-linked (GlcNAc...) asparagine glycosylation. Pro residues predominate over residues 372 to 382 (PVPPTLAPPLP). Residue Asn-383 is glycosylated (N-linked (GlcNAc...) asparagine). The segment covering 383–395 (NTTSVPPNKASSM) has biased composition (low complexity). The segment covering 396-407 (PAPPPPPPPPPG) has biased composition (pro residues). Over residues 408 to 422 (AFSTSSALSASSIPL) the composition is skewed to low complexity. Positions 423-432 (APLPPPPPPS) are enriched in pro residues. The span at 447-469 (LTTNKPSASSKQSKISSSSSSSA) shows a compositional bias: low complexity. Over residues 502-516 (DKQEDVIGSSKDDNV) the composition is skewed to basic and acidic residues. Over residues 518 to 534 (PSPISPSINPPKQSSQN) the composition is skewed to low complexity. Phosphoserine is present on Ser-519. A compositionally biased stretch (pro residues) spans 557–579 (APPPHTDAMAPPLPPSAPPPPIT). The segment covering 588–597 (GDDHTNDKSE) has biased composition (basic and acidic residues). Residues 649-661 (PPSPPVAAAPPLP) are compositionally biased toward pro residues. Residues 713–737 (MDTGTSNSPSKNLKQRLFSTGGSTL) show a composition bias toward polar residues. Ser-762 is subject to Phosphoserine. N-linked (GlcNAc...) asparagine glycosylation is found at Asn-784 and Asn-796. Positions 786–806 (SQMPKPRPFQNKTKLYPSGKG) are disordered.

It belongs to the verprolin family. In terms of processing, N-glycosylated.

The protein resides in the cytoplasm. It localises to the cytoskeleton. Functionally, involved in cytoskeletal organization and cellular growth. May exert its effects on the cytoskeleton directly, or indirectly via proline-binding proteins (e.g. profilin) or proteins possessing SH3 domains. This chain is Verprolin (VRP1), found in Saccharomyces cerevisiae (strain ATCC 204508 / S288c) (Baker's yeast).